Reading from the N-terminus, the 413-residue chain is Tyrosine--tRNA ligase 2 (413 aa).

The 'HIGH' region motif lies at 58 to 67; the sequence is PSAPDVHLGH. A run of 2 repeats spans residues 89–94 and 96–101. The tract at residues 89 to 101 is 2 X 6 AA tandem repeats; sequence GDFTGKIGDPTGK. The short motif at 242 to 246 is the 'KMSKS' region element; the sequence is KMSKS. Lys245 contributes to the ATP binding site. In terms of domain architecture, S4 RNA-binding spans 353-413; it reads IAMIDLLVKL…VGKRKFLKLQ (61 aa).

Belongs to the class-I aminoacyl-tRNA synthetase family. TyrS type 2 subfamily. Homodimer.

Its subcellular location is the cytoplasm. It carries out the reaction tRNA(Tyr) + L-tyrosine + ATP = L-tyrosyl-tRNA(Tyr) + AMP + diphosphate + H(+). In terms of biological role, catalyzes the attachment of tyrosine to tRNA(Tyr) in a two-step reaction: tyrosine is first activated by ATP to form Tyr-AMP and then transferred to the acceptor end of tRNA(Tyr). The polypeptide is Tyrosine--tRNA ligase 2 (Bacillus subtilis (strain 168)).